The sequence spans 944 residues: UvrABC system protein A (944 aa).

31–38 contacts ATP; sequence GLSGSGKS. A C4-type zinc finger spans residues 253–280; the sequence is CPVCGHAISELEPKLFSFNNPAGACPTC. 2 ABC transporter domains span residues 309-586 and 606-936; these read WDRR…PDSL and RNKK…HYLK. Position 639-646 (639-646) interacts with ATP; that stretch reads GVSGSGKS. Residues 739-765 form a C4-type zinc finger; sequence CEACQGDGLIKVEMHFLPDIYVPCDVC.

This sequence belongs to the ABC transporter superfamily. UvrA family. Forms a heterotetramer with UvrB during the search for lesions.

It localises to the cytoplasm. In terms of biological role, the UvrABC repair system catalyzes the recognition and processing of DNA lesions. UvrA is an ATPase and a DNA-binding protein. A damage recognition complex composed of 2 UvrA and 2 UvrB subunits scans DNA for abnormalities. When the presence of a lesion has been verified by UvrB, the UvrA molecules dissociate. The chain is UvrABC system protein A from Pseudomonas putida (strain ATCC 47054 / DSM 6125 / CFBP 8728 / NCIMB 11950 / KT2440).